The chain runs to 399 residues: Probable dual-specificity RNA methyltransferase RlmN (399 aa).

The active-site Proton acceptor is the Glu102. In terms of domain architecture, Radical SAM core spans 108–385 (YLDRATVCVS…CTVRVERGVA (278 aa)). An intrachain disulfide couples Cys115 to Cys390. The [4Fe-4S] cluster site is built by Cys122, Cys126, and Cys129. Residues 207–208 (GE), Ser239, 262–264 (SLH), and Asn347 contribute to the S-adenosyl-L-methionine site. The active-site S-methylcysteine intermediate is the Cys390.

This sequence belongs to the radical SAM superfamily. RlmN family. It depends on [4Fe-4S] cluster as a cofactor.

Its subcellular location is the cytoplasm. The enzyme catalyses adenosine(2503) in 23S rRNA + 2 reduced [2Fe-2S]-[ferredoxin] + 2 S-adenosyl-L-methionine = 2-methyladenosine(2503) in 23S rRNA + 5'-deoxyadenosine + L-methionine + 2 oxidized [2Fe-2S]-[ferredoxin] + S-adenosyl-L-homocysteine. The catalysed reaction is adenosine(37) in tRNA + 2 reduced [2Fe-2S]-[ferredoxin] + 2 S-adenosyl-L-methionine = 2-methyladenosine(37) in tRNA + 5'-deoxyadenosine + L-methionine + 2 oxidized [2Fe-2S]-[ferredoxin] + S-adenosyl-L-homocysteine. In terms of biological role, specifically methylates position 2 of adenine 2503 in 23S rRNA and position 2 of adenine 37 in tRNAs. This is Probable dual-specificity RNA methyltransferase RlmN from Roseiflexus castenholzii (strain DSM 13941 / HLO8).